We begin with the raw amino-acid sequence, 96 residues long: Large ribosomal subunit protein uL23 (96 aa).

It belongs to the universal ribosomal protein uL23 family. In terms of assembly, part of the 50S ribosomal subunit. Contacts protein L29, and trigger factor when it is bound to the ribosome.

One of the early assembly proteins it binds 23S rRNA. One of the proteins that surrounds the polypeptide exit tunnel on the outside of the ribosome. Forms the main docking site for trigger factor binding to the ribosome. The chain is Large ribosomal subunit protein uL23 from Desulfovibrio desulfuricans (strain ATCC 27774 / DSM 6949 / MB).